Here is a 1160-residue protein sequence, read N- to C-terminus: MALWATSMRRAIPGISKAFLGSNRVLETAGVSQLSKHLLPQWSGVPHRKISASATNFNDKVKESNTPDANAYIRSGHIKAAEHEKVKKVVVVGSGGLSIGQAGEFDYSGAQAIKALRESSVHTILINPNIATIQSSHSLADEIYFLPVTAEYLTHLIERENPDGILLTFGGQTALNVGIQLDDMGVFARNHVKVLGTPISTLKTSEDRDLFAKALNEINIPIAESVAVSTVDEALQAAEKVSYPVIIRSAYSLGGLGSGFANNKEELQSMAAKSLSLTPQILVEKSLKGWKEVEYEVVRDAANNCITVCNMENFDPLGIHTGDSIVVAPSQTLSDEEYHMLRTAAIKIIRHLGVVGECNVQYALSPNSLEYRVIEVNARLSRSSALASKATGYPLAYTAAKIALGHTLPELPNAVTKTTTANFEPSLDYVVTKIPRWDLSKFQYVNREIGSSMKSVGEVMAVGRTFEESLQKALRQVDPSFLGFMAMPFKDLDNALSVPTDRRFFAVVEAMLNQGYSIDKIHDLTKIDKWFLSKLANMAKVYKELEEIGSLYGLNKEIMLRAKKTGFSDLQISKLVGASELDVRARRKRLDVHPWVKKIDTLAAEFPAHTNYLYTSYNASSHDIDFNEHGTMVLGSGVYRIGSSVEFDWCGVSCARTLRKLGHSTIMVNYNPETVSTDFDECERLYFEELSYERVMDIYEMETASGIVVSVGGQLPQNIALKLQETGAKVLGTDPLMIDSAEDRHKFSQILDKIGVDQPAWKELTSVAEASKFANAVGYPVLVRPSYVLSGAAMSVIRDESSLKDKLENASAVSPDHPVVITKFIEGARELDVDAVASKGKLLVHAVSEHVENAGVHSGDATIALPPYSLSEDILSRCKEIAEKVCKAFQITGPYNMQIILAQNPDKPDTPDLKVIECNLRASRSFPFVSKTLGVNFIDVATRSIIDQEVPAARDLMAVHRDYVCVKVPQFSWTRLAGADPYLGVEMSSTGEVACFGKDVKEAYWAALQSTQNFKIPLPGQGILLGGDRPELAGIAADLSKLGYKLYVANKDAAKLLQPTSAEVVEFPVKDKRALRAIFEKYNIRSVFNLASARGKNVLDQDYVMRRNAVDFNVTLINDVNCAKLFVESLKEKLPSVLSEKKEMPSEVKRWSEWIGSHDL.

The interval 81–478 (AEHEKVKKVV…SLQKALRQVD (398 aa)) is carboxyphosphate synthetic domain. Residues arginine 208, arginine 248, glycine 254, glycine 255, lysine 285, leucine 287, glutamate 292, glycine 318, isoleucine 319, histidine 320, glutamine 361, and glutamate 375 each coordinate ATP. Residues 212-404 (AKALNEINIP…LAYTAAKIAL (193 aa)) enclose the ATP-grasp 1 domain. 3 residues coordinate Mg(2+): glutamine 361, glutamate 375, and asparagine 377. Glutamine 361, glutamate 375, and asparagine 377 together coordinate Mn(2+). The interval 479–623 (PSFLGFMAMP…YTSYNASSHD (145 aa)) is oligomerization domain. Residues 624-1012 (IDFNEHGTMV…AYWAALQSTQ (389 aa)) are carbamoyl phosphate synthetic domain. Residues 748-946 (SQILDKIGVD…FIDVATRSII (199 aa)) form the ATP-grasp 2 domain. ATP-binding residues include arginine 784, lysine 823, isoleucine 825, glutamate 830, glycine 855, valine 856, histidine 857, serine 858, glutamine 898, and glutamate 917. Residues glutamine 898, glutamate 917, and asparagine 919 each coordinate Mg(2+). Glutamine 898, glutamate 917, and asparagine 919 together coordinate Mn(2+). The allosteric domain stretch occupies residues 1013-1144 (NFKIPLPGQG…PSVLSEKKEM (132 aa)). In terms of domain architecture, MGS-like spans 1014–1160 (FKIPLPGQGI…WSEWIGSHDL (147 aa)).

Belongs to the CarB family. In terms of assembly, heterodimer composed of 2 chains; the small (or glutamine) chain promotes the hydrolysis of glutamine to ammonia, which is used by the large (or ammonia) chain to synthesize carbamoyl phosphate. Mg(2+) serves as cofactor. Requires Mn(2+) as cofactor.

The protein resides in the mitochondrion. The enzyme catalyses hydrogencarbonate + L-glutamine + 2 ATP + H2O = carbamoyl phosphate + L-glutamate + 2 ADP + phosphate + 2 H(+). The catalysed reaction is hydrogencarbonate + NH4(+) + 2 ATP = carbamoyl phosphate + 2 ADP + phosphate + 2 H(+). The protein operates within amino-acid biosynthesis; L-arginine biosynthesis; carbamoyl phosphate from bicarbonate: step 1/1. In terms of biological role, large subunit of the arginine-specific carbamoyl phosphate synthase (CPSase). CPSase catalyzes the formation of carbamoyl phosphate from the ammonia moiety of glutamine, hydrogencarbonate, and phosphate donated by ATP, the first step of the arginine biosynthetic pathway. The large subunit (synthetase) binds the substrates ammonia (free or transferred from glutamine from the small subunit), hydrogencarbonate and ATP and carries out an ATP-coupled ligase reaction, activating hydrogencarbonate by forming carboxy phosphate which reacts with ammonia to form carbamoyl phosphate. The polypeptide is Carbamoyl phosphate synthase arginine-specific large chain, mitochondrial (arg4) (Schizosaccharomyces pombe (strain 972 / ATCC 24843) (Fission yeast)).